We begin with the raw amino-acid sequence, 752 residues long: Neuroendocrine convertase 1 (752 aa).

A signal peptide spans M1–A27. A propeptide spanning residues K28–R110 is cleaved from the precursor. In terms of domain architecture, Peptidase S8 spans Q129 to V450. D167 serves as the catalytic Charge relay system. A glycan (N-linked (GlcNAc...) asparagine) is linked at N173. The Charge relay system role is filled by H208. Cystine bridges form between C225–C374 and C317–C347. S382 acts as the Charge relay system in catalysis. The N-linked (GlcNAc...) asparagine glycan is linked to N401. A P/Homo B domain is found at N460–Q597. A disulfide bond links C467 and C494. The segment at P631–A662 is disordered. N-linked (GlcNAc...) asparagine glycosylation is present at N645.

It belongs to the peptidase S8 family. Furin subfamily. It depends on Ca(2+) as a cofactor.

Its subcellular location is the cytoplasmic vesicle. The protein resides in the secretory vesicle. The catalysed reaction is Release of protein hormones, neuropeptides and renin from their precursors, generally by hydrolysis of -Lys-Arg-|- bonds.. Its function is as follows. Involved in the processing of hormone and other protein precursors at sites comprised of pairs of basic amino acid residues. Substrates include POMC, renin, enkephalin, dynorphin, somatostatin, insulin and AGRP. The chain is Neuroendocrine convertase 1 (Pcsk1) from Rattus norvegicus (Rat).